The primary structure comprises 152 residues: Methylglyoxal synthase (152 aa).

An MGS-like domain is found at 6 to 152; that stretch reads RTIPAQKHIA…YQRYLQDRLK (147 aa). Residues histidine 19, lysine 23, 45–48, and 65–66 each bind substrate; these read TGTT and SG. Aspartate 71 serves as the catalytic Proton donor/acceptor. Histidine 98 lines the substrate pocket.

The protein belongs to the methylglyoxal synthase family.

It carries out the reaction dihydroxyacetone phosphate = methylglyoxal + phosphate. Catalyzes the formation of methylglyoxal from dihydroxyacetone phosphate. The protein is Methylglyoxal synthase of Pectobacterium atrosepticum (strain SCRI 1043 / ATCC BAA-672) (Erwinia carotovora subsp. atroseptica).